We begin with the raw amino-acid sequence, 413 residues long: 3-oxoacyl-[acyl-carrier-protein] synthase 2 (413 aa).

Residues 3-412 (KRRVVVTGLG…GTNGSLIFKK (410 aa)) enclose the Ketosynthase family 3 (KS3) domain. Catalysis depends on for beta-ketoacyl synthase activity residues Cys-164, His-304, and His-341.

It belongs to the thiolase-like superfamily. Beta-ketoacyl-ACP synthases family. As to quaternary structure, homodimer.

The catalysed reaction is a fatty acyl-[ACP] + malonyl-[ACP] + H(+) = a 3-oxoacyl-[ACP] + holo-[ACP] + CO2. The enzyme catalyses (9Z)-hexadecenoyl-[ACP] + malonyl-[ACP] + H(+) = 3-oxo-(11Z)-octadecenoyl-[ACP] + holo-[ACP] + CO2. The protein operates within lipid metabolism; fatty acid biosynthesis. Functionally, involved in the type II fatty acid elongation cycle. Catalyzes the elongation of a wide range of acyl-ACP by the addition of two carbons from malonyl-ACP to an acyl acceptor. Can efficiently catalyze the conversion of palmitoleoyl-ACP (cis-hexadec-9-enoyl-ACP) to cis-vaccenoyl-ACP (cis-octadec-11-enoyl-ACP), an essential step in the thermal regulation of fatty acid composition. This is 3-oxoacyl-[acyl-carrier-protein] synthase 2 (fabF) from Escherichia coli O157:H7.